The following is a 627-amino-acid chain: Phosphomethylpyrimidine synthase (627 aa).

Over residues 1–24 the composition is skewed to polar residues; the sequence is MSATQKNNITRLEQLDRQSTQPFP. The tract at residues 1–29 is disordered; sequence MSATQKNNITRLEQLDRQSTQPFPNSRKV. Residues Asn-231, Met-260, Tyr-289, His-325, 345-347, 386-389, and Glu-425 each bind substrate; these read SRG and DGLR. His-429 contacts Zn(2+). Tyr-452 lines the substrate pocket. Residue His-493 participates in Zn(2+) binding. The [4Fe-4S] cluster site is built by Cys-573, Cys-576, and Cys-581.

The protein belongs to the ThiC family. In terms of assembly, homodimer. [4Fe-4S] cluster serves as cofactor.

The enzyme catalyses 5-amino-1-(5-phospho-beta-D-ribosyl)imidazole + S-adenosyl-L-methionine = 4-amino-2-methyl-5-(phosphooxymethyl)pyrimidine + CO + 5'-deoxyadenosine + formate + L-methionine + 3 H(+). The protein operates within cofactor biosynthesis; thiamine diphosphate biosynthesis. In terms of biological role, catalyzes the synthesis of the hydroxymethylpyrimidine phosphate (HMP-P) moiety of thiamine from aminoimidazole ribotide (AIR) in a radical S-adenosyl-L-methionine (SAM)-dependent reaction. This Pseudomonas aeruginosa (strain LESB58) protein is Phosphomethylpyrimidine synthase.